Reading from the N-terminus, the 298-residue chain is Cytidine deaminase (298 aa).

2 consecutive CMP/dCMP-type deaminase domains span residues 47–167 (TEQQ…FGPS) and 186–298 (DSDD…PLLG). Substrate is bound at residue 88-90 (NLE). Residue His-101 coordinates Zn(2+). Catalysis depends on Glu-103, which acts as the Proton donor. Positions 128 and 131 each coordinate Zn(2+).

This sequence belongs to the cytidine and deoxycytidylate deaminase family. Homodimer. Zn(2+) is required as a cofactor.

It carries out the reaction cytidine + H2O + H(+) = uridine + NH4(+). It catalyses the reaction 2'-deoxycytidine + H2O + H(+) = 2'-deoxyuridine + NH4(+). Its function is as follows. This enzyme scavenges exogenous and endogenous cytidine and 2'-deoxycytidine for UMP synthesis. The chain is Cytidine deaminase from Shewanella frigidimarina (strain NCIMB 400).